The sequence spans 591 residues: MPTVGIKKVILDKHFKRVYSEKEFDELCFEYGLELDEITSEKAAVEKEQGTRAASDLNDQEVYKIDIPANRYDLLSVEGLARAIRIFKQEIPSPAYKYADVPKTGLQKIIVKKETAQVRPFVVGAVLRDISFDADSYASFIDLQDKLHQNICRKRTLVAIGTHDLDTIQGPFEYRAEAPKDIKFKPLNQTKEYTAEELMTLYSTDSHLKAYLPIIQNHPVYPVIYDKNGVVCSMPPIINGEHSKITLNTKNVFIEATATDKQKAFVVLDTIVTLFSQYCAKPFTIEQVEVVYEETGVKELYPLLSYREMTVTTPEINTKIGINLKDEEMATLLNKMSLKAEVAAKETLKIVVPPTRHDILHACDIAEDVGVAFGYNNLITKLPESNTVAVAFPINKLCDNLRIEIAAAGWTEALNFALCSRDDISSKLRQPDALSHAVHIGNPKTLEFQVARTSLLPGLLKTLSSNRDMPLPLKLFELQDVIVKDSNTDVGARNERRLAAVYYNRAAGFEIIQGFLDRIMRMLNVNPARDGTGYYIEADENSTYFPGRCAKIIGPKGVVLGHIGALHPEVITSFGLTLPCGAVEINVEPFL.

In terms of domain architecture, B5 spans 304-380 (LSYREMTVTT…VAFGYNNLIT (77 aa)). Residues aspartate 358, aspartate 364, glutamate 367, and aspartate 368 each coordinate Mg(2+).

The protein belongs to the phenylalanyl-tRNA synthetase beta subunit family. Type 2 subfamily. As to quaternary structure, tetramer of two alpha and two beta subunits. Mg(2+) is required as a cofactor.

It is found in the cytoplasm. The enzyme catalyses tRNA(Phe) + L-phenylalanine + ATP = L-phenylalanyl-tRNA(Phe) + AMP + diphosphate + H(+). The polypeptide is Phenylalanine--tRNA ligase beta subunit (Caenorhabditis elegans).